We begin with the raw amino-acid sequence, 259 residues long: Adenosylcobinamide-GDP ribazoletransferase (259 aa).

A run of 6 helical transmembrane segments spans residues 37-57, 58-78, 118-138, 143-163, 195-215, and 237-257; these read ASRY…LVYS, VMLH…ASVL, ALAL…LALF, VSLA…SFIF, AAIS…LGLL, and LGAT…IVGA.

Belongs to the CobS family. The cofactor is Mg(2+).

The protein resides in the cell inner membrane. It catalyses the reaction alpha-ribazole + adenosylcob(III)inamide-GDP = adenosylcob(III)alamin + GMP + H(+). The enzyme catalyses alpha-ribazole 5'-phosphate + adenosylcob(III)inamide-GDP = adenosylcob(III)alamin 5'-phosphate + GMP + H(+). It participates in cofactor biosynthesis; adenosylcobalamin biosynthesis; adenosylcobalamin from cob(II)yrinate a,c-diamide: step 7/7. In terms of biological role, joins adenosylcobinamide-GDP and alpha-ribazole to generate adenosylcobalamin (Ado-cobalamin). Also synthesizes adenosylcobalamin 5'-phosphate from adenosylcobinamide-GDP and alpha-ribazole 5'-phosphate. In Shewanella piezotolerans (strain WP3 / JCM 13877), this protein is Adenosylcobinamide-GDP ribazoletransferase.